A 444-amino-acid chain; its full sequence is Methylenetetrahydrofolate--tRNA-(uracil-5-)-methyltransferase TrmFO (444 aa).

10–15 (GAGLAG) contributes to the FAD binding site.

The protein belongs to the MnmG family. TrmFO subfamily. FAD serves as cofactor.

Its subcellular location is the cytoplasm. The catalysed reaction is uridine(54) in tRNA + (6R)-5,10-methylene-5,6,7,8-tetrahydrofolate + NADH + H(+) = 5-methyluridine(54) in tRNA + (6S)-5,6,7,8-tetrahydrofolate + NAD(+). It carries out the reaction uridine(54) in tRNA + (6R)-5,10-methylene-5,6,7,8-tetrahydrofolate + NADPH + H(+) = 5-methyluridine(54) in tRNA + (6S)-5,6,7,8-tetrahydrofolate + NADP(+). Functionally, catalyzes the folate-dependent formation of 5-methyl-uridine at position 54 (M-5-U54) in all tRNAs. This Streptococcus gordonii (strain Challis / ATCC 35105 / BCRC 15272 / CH1 / DL1 / V288) protein is Methylenetetrahydrofolate--tRNA-(uracil-5-)-methyltransferase TrmFO.